We begin with the raw amino-acid sequence, 278 residues long: 3-methyl-2-oxobutanoate hydroxymethyltransferase 1 (278 aa).

Mg(2+)-binding residues include Asp49 and Asp88. 3-methyl-2-oxobutanoate is bound by residues 49–50, Asp88, and Lys118; that span reads DS. Glu120 contacts Mg(2+). Glu187 functions as the Proton acceptor in the catalytic mechanism.

Belongs to the PanB family. In terms of assembly, homodecamer; pentamer of dimers. The cofactor is Mg(2+).

It is found in the cytoplasm. It catalyses the reaction 3-methyl-2-oxobutanoate + (6R)-5,10-methylene-5,6,7,8-tetrahydrofolate + H2O = 2-dehydropantoate + (6S)-5,6,7,8-tetrahydrofolate. The protein operates within cofactor biosynthesis; (R)-pantothenate biosynthesis; (R)-pantoate from 3-methyl-2-oxobutanoate: step 1/2. Functionally, catalyzes the reversible reaction in which hydroxymethyl group from 5,10-methylenetetrahydrofolate is transferred onto alpha-ketoisovalerate to form ketopantoate. The protein is 3-methyl-2-oxobutanoate hydroxymethyltransferase 1 of Hahella chejuensis (strain KCTC 2396).